The sequence spans 451 residues: DNA polymerase delta subunit 3 (451 aa).

Disordered regions lie at residues 187–241 (SQAK…AASS), 259–386 (KQTP…KVLR), and 404–451 (AWES…FAKK). The segment covering 200 to 216 (PSTSQVKEAPKASQTVE) has biased composition (polar residues). Positions 225–241 (SAPAKKGSSAPKSAASS) are enriched in low complexity. A compositionally biased stretch (basic and acidic residues) spans 306-316 (QREEELRRMME). A compositionally biased stretch (acidic residues) spans 329–353 (EEEEEEEEEEESEHEQLPAEEEPMA). Over residues 354–366 (EEPKAPEPVKEEP) the composition is skewed to basic and acidic residues. Positions 376–386 (GRRRGKRKVLR) are enriched in basic residues. A PIP-box motif is present at residues 441 to 448 (QGSIMSWF).

Component of the DNA polymerase delta complex which consists of PolD1, PolD2, PolD3 and PolD4, with PolD1 bearing DNA polymerase and 3' to 5' proofreading exonuclease activities. Directly interacts with PCNA.

The protein localises to the nucleus. Accessory component of the DNA polymerase delta complex. The complex is required for the maintenance of genome integrity, acting in concert with the sliding clamp processivity factor PCNA. This chain is DNA polymerase delta subunit 3, found in Chaetomium thermophilum (strain DSM 1495 / CBS 144.50 / IMI 039719) (Thermochaetoides thermophila).